Reading from the N-terminus, the 147-residue chain is Mid1-interacting protein 1-B (147 aa).

Belongs to the SPOT14 family.

It localises to the nucleus. The protein resides in the cytoplasm. The protein localises to the cytoskeleton. In terms of biological role, involved in stabilization of microtubules. May play a role in the regulation of lipogenesis. This Danio rerio (Zebrafish) protein is Mid1-interacting protein 1-B.